The primary structure comprises 294 residues: Probable 2-(5''-triphosphoribosyl)-3'-dephosphocoenzyme-A synthase (294 aa).

This sequence belongs to the CitG/MdcB family.

The catalysed reaction is 3'-dephospho-CoA + ATP = 2'-(5''-triphospho-alpha-D-ribosyl)-3'-dephospho-CoA + adenine. This is Probable 2-(5''-triphosphoribosyl)-3'-dephosphocoenzyme-A synthase from Streptococcus equi subsp. zooepidemicus (strain H70).